The following is a 402-amino-acid chain: CCA-adding enzyme (402 aa).

Gly-32 and Arg-35 together coordinate ATP. Gly-32 and Arg-35 together coordinate CTP. Asp-45 and Asp-47 together coordinate Mg(2+). The ATP site is built by Arg-116, Asp-159, Arg-162, Arg-165, and Arg-168. The CTP site is built by Arg-116, Asp-159, Arg-162, Arg-165, and Arg-168.

It belongs to the tRNA nucleotidyltransferase/poly(A) polymerase family. Bacterial CCA-adding enzyme type 3 subfamily. Homodimer. Mg(2+) is required as a cofactor.

It catalyses the reaction a tRNA precursor + 2 CTP + ATP = a tRNA with a 3' CCA end + 3 diphosphate. The catalysed reaction is a tRNA with a 3' CCA end + 2 CTP + ATP = a tRNA with a 3' CCACCA end + 3 diphosphate. Functionally, catalyzes the addition and repair of the essential 3'-terminal CCA sequence in tRNAs without using a nucleic acid template. Adds these three nucleotides in the order of C, C, and A to the tRNA nucleotide-73, using CTP and ATP as substrates and producing inorganic pyrophosphate. tRNA 3'-terminal CCA addition is required both for tRNA processing and repair. Also involved in tRNA surveillance by mediating tandem CCA addition to generate a CCACCA at the 3' terminus of unstable tRNAs. While stable tRNAs receive only 3'-terminal CCA, unstable tRNAs are marked with CCACCA and rapidly degraded. This chain is CCA-adding enzyme, found in Streptococcus pyogenes serotype M4 (strain MGAS10750).